A 193-amino-acid polypeptide reads, in one-letter code: Small ribosomal subunit protein eS1 (193 aa).

Belongs to the eukaryotic ribosomal protein eS1 family.

This Sulfurisphaera tokodaii (strain DSM 16993 / JCM 10545 / NBRC 100140 / 7) (Sulfolobus tokodaii) protein is Small ribosomal subunit protein eS1.